The following is a 365-amino-acid chain: Putative agmatine deiminase (365 aa).

Cys-356 acts as the Amidino-cysteine intermediate in catalysis.

The protein belongs to the agmatine deiminase family.

It catalyses the reaction agmatine + H2O = N-carbamoylputrescine + NH4(+). In Latilactobacillus sakei subsp. sakei (strain 23K) (Lactobacillus sakei subsp. sakei), this protein is Putative agmatine deiminase.